The primary structure comprises 149 residues: Ribonuclease P protein component (149 aa).

Positions 123–149 (GTKVSRRSNGALHDAAPSSQPDPTVSG) are disordered. Polar residues predominate over residues 139–149 (PSSQPDPTVSG).

This sequence belongs to the RnpA family. In terms of assembly, consists of a catalytic RNA component (M1 or rnpB) and a protein subunit.

It catalyses the reaction Endonucleolytic cleavage of RNA, removing 5'-extranucleotides from tRNA precursor.. RNaseP catalyzes the removal of the 5'-leader sequence from pre-tRNA to produce the mature 5'-terminus. It can also cleave other RNA substrates such as 4.5S RNA. The protein component plays an auxiliary but essential role in vivo by binding to the 5'-leader sequence and broadening the substrate specificity of the ribozyme. The polypeptide is Ribonuclease P protein component (Caulobacter vibrioides (strain ATCC 19089 / CIP 103742 / CB 15) (Caulobacter crescentus)).